A 389-amino-acid polypeptide reads, in one-letter code: Brix domain-containing protein C1B9.03c (389 aa).

The Brix domain occupies 28-309; it reads SMVIRSGASE…LIKITEDAMG (282 aa). The segment covering 323–350 has biased composition (basic and acidic residues); it reads EEIKQQDNFHEQSRALKEKRKKEQDENV. The disordered stretch occupies residues 323 to 389; it reads EEIKQQDNFH…EGSSAYSDTE (67 aa). The segment covering 351-362 has biased composition (basic residues); that stretch reads RRKRENKKRRKD. Residue Ser377 is modified to Phosphoserine. Over residues 379–389 the composition is skewed to polar residues; that stretch reads NEGSSAYSDTE.

This Schizosaccharomyces pombe (strain 972 / ATCC 24843) (Fission yeast) protein is Brix domain-containing protein C1B9.03c.